We begin with the raw amino-acid sequence, 229 residues long: CMRF35-like molecule 6 (229 aa).

Residues 1–21 (MNPRVIRLWLPSAVLLSLVPG) form the signal peptide. The region spanning 22 to 126 (HFPVRGPSTV…FYDAYLQIDK (105 aa)) is the Ig-like V-type domain. Residues 22-188 (HFPVRGPSTV…ELRSLLSSPH (167 aa)) lie on the Extracellular side of the membrane. A disulfide bridge connects residues C43 and C110. N90 and N99 each carry an N-linked (GlcNAc...) asparagine glycan. Residues 189–209 (FWILVSLKLPLFLSMLGALLW) traverse the membrane as a helical segment. At 210–229 (VNRPQRCSGGSSAWPCYENQ) the chain is on the cytoplasmic side.

Belongs to the CD300 family.

Its subcellular location is the cell membrane. The sequence is that of CMRF35-like molecule 6 (Cd300c) from Mus musculus (Mouse).